A 1582-amino-acid polypeptide reads, in one-letter code: Nik-related protein kinase (1582 aa).

One can recognise a Protein kinase domain in the interval 25-313; that stretch reads FSLDKTIGLG…SANMLQHPFV (289 aa). Residues 31-39 and Lys54 contribute to the ATP site; that span reads IGLGTYGRI. Asp177 (proton acceptor) is an active-site residue. Composition is skewed to low complexity over residues 492–507, 527–538, and 551–572; these read QVQS…QTQT, PEQQRQGQAPEQ, and EQNQ…AQAE. The disordered stretch occupies residues 492 to 579; it reads QVQSQVSKKQ…QAETEAEEPE (88 aa). A coiled-coil region spans residues 725–759; it reads QRRQRRWEDIFNQHEEELRQVDKDKEDESSDNDEV. Disordered stretches follow at residues 783 to 859 and 926 to 1156; these read EVQE…PPYS and ASAD…GSGM. Polar residues-rich tracts occupy residues 803 to 814, 825 to 834, and 850 to 859; these read FSSSVPQRSLLE, RSSQNRQNWL, and RRSQSSPPYS. Phosphoserine occurs at positions 852 and 855. Over residues 926–944 the composition is skewed to acidic residues; it reads ASADTDGDDDDESNDTFED. Composition is skewed to basic and acidic residues over residues 965–978 and 999–1016; these read VCKD…KFVD and GSCK…EEAY. 3 positions are modified to phosphoserine: Ser1027, Ser1031, and Ser1034. 2 stretches are compositionally biased toward basic and acidic residues: residues 1043-1061 and 1125-1135; these read QEEH…EGDG and PDHESDNKDIS. The segment covering 1136-1154 has biased composition (polar residues); that stretch reads ESSTQSDFSANHSSPSKGS. The 344-residue stretch at 1209 to 1552 folds into the CNH domain; the sequence is TSEICCGSLW…RFLCTRGDKL (344 aa).

Belongs to the protein kinase superfamily. STE Ser/Thr protein kinase family. STE20 subfamily.

The catalysed reaction is L-seryl-[protein] + ATP = O-phospho-L-seryl-[protein] + ADP + H(+). The enzyme catalyses L-threonyl-[protein] + ATP = O-phospho-L-threonyl-[protein] + ADP + H(+). Its function is as follows. May phosphorylate cofilin-1 and induce actin polymerization through this process, during the late stages of embryogenesis. Involved in the TNF-alpha-induced signaling pathway. The protein is Nik-related protein kinase (NRK) of Homo sapiens (Human).